We begin with the raw amino-acid sequence, 1119 residues long: DISARM protein DrmA (1119 aa).

The tract at residues 73–95 (PESGMEEDVEQQRNSELEQEAEE) is disordered. The Helicase C-terminal domain occupies 813–986 (ELSKYIDPYR…ATPYASRARD (174 aa)).

Belongs to the helicase family.

The protein resides in the cytoplasm. Component of antiviral defense system DISARM (defense island system associated with restriction-modification), composed of DrmE, DrmA, DrmB, DrmC and DrmMII. DISARM is probably a multi-gene restriction module, this subunit is probably a helicase. Expression of DISARM in B.subtilis (strain BEST7003) confers resistance to phages Nf, phi29, phi105, phi3T, SPO1, SPR and SPP1. Protection is over 10(7)-fold against phi3T, 10(4)-10(5)-fold against Nf, phi29, phi105 and SPR, 100-fold against SPO1 and 10-fold against SPP1. DISARM does not interfere with phage adsorption, but instead interferes with (phi3T) DNA replication early in its cycle, preventing replication, circularization and lysogeny and probably causes phage DNA degradation (DNA is degraded in SPP1-infected cells). The protein is DISARM protein DrmA of Bacillus paralicheniformis (strain ATCC 9945a / NCIMB 11709 / CD-2).